The chain runs to 341 residues: MKALSKLKAQPGIWMTDVPVPELGHNDVMIKIRKTAICGTDVHIYNWDEWSQKTIPVPMVVGHEYIGEIVAIGQEVKGFNIGDRVSGEGHITCGHCRNCRGGRTHLCRNTIGVGVNRPGCFAEYLVIPAFNAFKIPDNIPDELAAIFDPFGNAVHTALSFDLVGEDVLVSGAGPIGIMAAAICKHVGARHVVITDVNEYRLDLAKKMGVTRAVNVSKENLTDVMKELGMTEGFDVGLEMSGAPPAFRTMLSTMNHGGRIALLGIPPSDMAIDWGQVIFKGLFIKGIYGREMFETWYKMAALIQSGLDLSPIITHQFPIDEFQKGFDIMRSGQSGKVILDWQ.

Cysteine 38 is a binding site for Zn(2+). Active-site charge relay system residues include threonine 40 and histidine 43. The Zn(2+) site is built by histidine 63, glutamate 64, cysteine 93, cysteine 96, cysteine 99, and cysteine 107. NAD(+)-binding positions include isoleucine 175, aspartate 195, arginine 200, 262-264, and 286-287; these read LGI and IY.

It belongs to the zinc-containing alcohol dehydrogenase family. In terms of assembly, homotetramer. It depends on Zn(2+) as a cofactor.

The protein resides in the cytoplasm. It catalyses the reaction L-threonine + NAD(+) = (2S)-2-amino-3-oxobutanoate + NADH + H(+). It functions in the pathway amino-acid degradation; L-threonine degradation via oxydo-reductase pathway; glycine from L-threonine: step 1/2. In terms of biological role, catalyzes the NAD(+)-dependent oxidation of L-threonine to 2-amino-3-ketobutyrate. This is L-threonine 3-dehydrogenase from Proteus mirabilis (strain HI4320).